We begin with the raw amino-acid sequence, 434 residues long: Methylenetetrahydrofolate--tRNA-(uracil-5-)-methyltransferase TrmFO (434 aa).

Glycine 10–glycine 15 lines the FAD pocket.

Belongs to the MnmG family. TrmFO subfamily. FAD is required as a cofactor.

It is found in the cytoplasm. It catalyses the reaction uridine(54) in tRNA + (6R)-5,10-methylene-5,6,7,8-tetrahydrofolate + NADH + H(+) = 5-methyluridine(54) in tRNA + (6S)-5,6,7,8-tetrahydrofolate + NAD(+). It carries out the reaction uridine(54) in tRNA + (6R)-5,10-methylene-5,6,7,8-tetrahydrofolate + NADPH + H(+) = 5-methyluridine(54) in tRNA + (6S)-5,6,7,8-tetrahydrofolate + NADP(+). In terms of biological role, catalyzes the folate-dependent formation of 5-methyl-uridine at position 54 (M-5-U54) in all tRNAs. The polypeptide is Methylenetetrahydrofolate--tRNA-(uracil-5-)-methyltransferase TrmFO (Bacillus anthracis (strain A0248)).